The sequence spans 537 residues: CTP synthase (537 aa).

Positions 1 to 268 are amidoligase domain; sequence MSTKYIFVTG…DQIVCDHLKL (268 aa). Residue Ser14 coordinates CTP. Ser14 provides a ligand contact to UTP. Residue 15-20 participates in ATP binding; the sequence is SIGKGI. An L-glutamine-binding site is contributed by Tyr55. Asp72 contacts ATP. Mg(2+)-binding residues include Asp72 and Glu142. CTP contacts are provided by residues 149-151, 189-194, and Lys225; these read DIE and KTKPTQ. Residues 189 to 194 and Lys225 contribute to the UTP site; that span reads KTKPTQ. One can recognise a Glutamine amidotransferase type-1 domain in the interval 293–536; sequence RIALVGKYVE…VTAAVEKSSD (244 aa). Position 355 (Gly355) interacts with L-glutamine. The active-site Nucleophile; for glutamine hydrolysis is the Cys382. L-glutamine contacts are provided by residues 383 to 386, Glu406, and Arg464; that span reads LGMQ. Catalysis depends on residues His509 and Glu511.

Belongs to the CTP synthase family. In terms of assembly, homotetramer.

The catalysed reaction is UTP + L-glutamine + ATP + H2O = CTP + L-glutamate + ADP + phosphate + 2 H(+). The enzyme catalyses L-glutamine + H2O = L-glutamate + NH4(+). It carries out the reaction UTP + NH4(+) + ATP = CTP + ADP + phosphate + 2 H(+). Its pathway is pyrimidine metabolism; CTP biosynthesis via de novo pathway; CTP from UDP: step 2/2. Allosterically activated by GTP, when glutamine is the substrate; GTP has no effect on the reaction when ammonia is the substrate. The allosteric effector GTP functions by stabilizing the protein conformation that binds the tetrahedral intermediate(s) formed during glutamine hydrolysis. Inhibited by the product CTP, via allosteric rather than competitive inhibition. Functionally, catalyzes the ATP-dependent amination of UTP to CTP with either L-glutamine or ammonia as the source of nitrogen. Regulates intracellular CTP levels through interactions with the four ribonucleotide triphosphates. The sequence is that of CTP synthase from Streptococcus sanguinis (strain SK36).